The sequence spans 362 residues: Chorismate synthase (362 aa).

Residue Arg47 coordinates NADP(+). FMN is bound by residues 124–126, Gly286, 301–305, and Arg327; these read RAS and KPTAT.

It belongs to the chorismate synthase family. Homotetramer. Requires FMNH2 as cofactor.

The enzyme catalyses 5-O-(1-carboxyvinyl)-3-phosphoshikimate = chorismate + phosphate. It participates in metabolic intermediate biosynthesis; chorismate biosynthesis; chorismate from D-erythrose 4-phosphate and phosphoenolpyruvate: step 7/7. Functionally, catalyzes the anti-1,4-elimination of the C-3 phosphate and the C-6 proR hydrogen from 5-enolpyruvylshikimate-3-phosphate (EPSP) to yield chorismate, which is the branch point compound that serves as the starting substrate for the three terminal pathways of aromatic amino acid biosynthesis. This reaction introduces a second double bond into the aromatic ring system. The sequence is that of Chorismate synthase from Prochlorococcus marinus (strain SARG / CCMP1375 / SS120).